A 696-amino-acid chain; its full sequence is Phosphate acetyltransferase (696 aa).

The interval 367–696 (FEHKLLEQAR…QSPHEKATAQ (330 aa)) is phosphate acetyltransferase.

The protein in the N-terminal section; belongs to the CobB/CobQ family. This sequence in the C-terminal section; belongs to the phosphate acetyltransferase and butyryltransferase family.

Its subcellular location is the cytoplasm. It carries out the reaction acetyl-CoA + phosphate = acetyl phosphate + CoA. It functions in the pathway metabolic intermediate biosynthesis; acetyl-CoA biosynthesis; acetyl-CoA from acetate: step 2/2. In terms of biological role, involved in acetate metabolism. The chain is Phosphate acetyltransferase (pta) from Streptomyces avermitilis (strain ATCC 31267 / DSM 46492 / JCM 5070 / NBRC 14893 / NCIMB 12804 / NRRL 8165 / MA-4680).